The following is a 337-amino-acid chain: HTH-type transcriptional repressor PurR (337 aa).

Positions 2-56 (ATIKDVAKLAAVSTTTVSHVINKTRFVAEATQKRVWEAVEELNYAPSAVARSLKC) constitute an HTH lacI-type domain. The H-T-H motif DNA-binding region spans 4–23 (IKDVAKLAAVSTTTVSHVIN). Residues 48 to 56 (SAVARSLKC) mediate DNA binding. Residues phenylalanine 73, lysine 189, threonine 191, phenylalanine 220, and aspartate 276 each coordinate hypoxanthine.

As to quaternary structure, homodimer.

The protein operates within purine metabolism; purine nucleotide biosynthesis [regulation]. Is the main repressor of the genes involved in the de novo synthesis of purine nucleotides, regulating purB, purC, purEK, purF, purHD, purL, purMN and guaBA expression. PurR is allosterically activated to bind its cognate DNA by binding the purine corepressors, hypoxanthine or guanine, thereby effecting transcription repression. In Aliivibrio fischeri (strain MJ11) (Vibrio fischeri), this protein is HTH-type transcriptional repressor PurR.